The chain runs to 349 residues: Transmembrane protein 59-like (349 aa).

An N-terminal signal peptide occupies residues 1–22 (MDSVALMPLLLLLLLQPPPATP). Asn-100 is a glycosylation site (N-linked (GlcNAc...) asparagine). A helical membrane pass occupies residues 276–296 (ILACCLFLSVLVMLWLSCSTL). Positions 347-349 (TKL) match the Microbody targeting signal motif.

It belongs to the TMEM59 family.

Its subcellular location is the golgi apparatus membrane. In terms of biological role, modulates the O-glycosylation and complex N-glycosylation steps occurring during the Golgi maturation of APP. Inhibits APP transport to the cell surface and further shedding. The chain is Transmembrane protein 59-like (TMEM59L) from Bos taurus (Bovine).